A 504-amino-acid chain; its full sequence is Lysine--tRNA ligase (504 aa).

The 'HIGH' region signature appears at 23 to 31 (PSGPIHIGN).

It belongs to the class-I aminoacyl-tRNA synthetase family.

It is found in the cytoplasm. It catalyses the reaction tRNA(Lys) + L-lysine + ATP = L-lysyl-tRNA(Lys) + AMP + diphosphate. The polypeptide is Lysine--tRNA ligase (Picrophilus torridus (strain ATCC 700027 / DSM 9790 / JCM 10055 / NBRC 100828 / KAW 2/3)).